The following is a 308-amino-acid chain: Homoserine O-succinyltransferase (308 aa).

Cys-142 (acyl-thioester intermediate) is an active-site residue. Residues Lys-163 and Ser-192 each coordinate substrate. His-235 functions as the Proton acceptor in the catalytic mechanism. Glu-237 is an active-site residue. Arg-249 is a substrate binding site.

Belongs to the MetA family.

The protein resides in the cytoplasm. The catalysed reaction is L-homoserine + succinyl-CoA = O-succinyl-L-homoserine + CoA. The protein operates within amino-acid biosynthesis; L-methionine biosynthesis via de novo pathway; O-succinyl-L-homoserine from L-homoserine: step 1/1. In terms of biological role, transfers a succinyl group from succinyl-CoA to L-homoserine, forming succinyl-L-homoserine. This Pseudoalteromonas atlantica (strain T6c / ATCC BAA-1087) protein is Homoserine O-succinyltransferase.